A 571-amino-acid chain; its full sequence is Septation ring formation regulator EzrA (571 aa).

Residues methionine 1–tyrosine 3 lie on the Extracellular side of the membrane. A helical membrane pass occupies residues methionine 4–leucine 22. Residues lysine 23 to glutamate 571 lie on the Cytoplasmic side of the membrane. Coiled coils occupy residues alanine 102–lysine 147, leucine 248–glutamate 298, aspartate 326–glutamate 374, lysine 400–arginine 437, and arginine 478–phenylalanine 529.

This sequence belongs to the EzrA family.

The protein resides in the cell membrane. Its function is as follows. Negative regulator of FtsZ ring formation; modulates the frequency and position of FtsZ ring formation. Inhibits FtsZ ring formation at polar sites. Interacts either with FtsZ or with one of its binding partners to promote depolymerization. The chain is Septation ring formation regulator EzrA from Listeria monocytogenes serotype 4a (strain HCC23).